Here is a 193-residue protein sequence, read N- to C-terminus: MTTVSRETHERLERFADLLVQWNAKINLVSPRDIAQLWPRHIEDSLQLAELIPEGKTITDLGSGGGFPGIILAIATGNPVTLIESDQRKCAFLREAGRICEARVTVIAKRIEAASPPPADIITARALAPLNRLLEWARPLLKEDGFCLFLKGQKAQAELTEASADWHMSHSIIPSRTDPGGAIIKVSDFKRVV.

S-adenosyl-L-methionine contacts are provided by residues glycine 62, phenylalanine 67, 111-112, and arginine 125; that span reads IE.

This sequence belongs to the methyltransferase superfamily. RNA methyltransferase RsmG family.

It localises to the cytoplasm. The enzyme catalyses guanosine(527) in 16S rRNA + S-adenosyl-L-methionine = N(7)-methylguanosine(527) in 16S rRNA + S-adenosyl-L-homocysteine. Functionally, specifically methylates the N7 position of guanine in position 527 of 16S rRNA. The chain is Ribosomal RNA small subunit methyltransferase G from Gluconobacter oxydans (strain 621H) (Gluconobacter suboxydans).